The sequence spans 504 residues: Probable cytochrome P450 305a1 (504 aa).

Cys-450 contributes to the heme binding site.

The protein belongs to the cytochrome P450 family. It depends on heme as a cofactor.

Its subcellular location is the endoplasmic reticulum membrane. It localises to the microsome membrane. Its function is as follows. May be involved in the metabolism of insect hormones and in the breakdown of synthetic insecticides. In Drosophila melanogaster (Fruit fly), this protein is Probable cytochrome P450 305a1 (Cyp305a1).